A 110-amino-acid polypeptide reads, in one-letter code: MAKGTRKPRQPRRVAVRFASRMKGRKKTLWQRRYRGSVKAPNMTMRVRRPLKGTLRKKIRSYATPSKKVKNTREPNCFLRSCAREKLNQSRKRYQNMRQSQRRGQNQKRR.

Residues 80 to 110 (RSCAREKLNQSRKRYQNMRQSQRRGQNQKRR) form a disordered region.

The protein localises to the nucleus. The protein resides in the chromosome. Involved in nuclear basic protein transition: histones are replaced by spermatid specific proteins which are themselves replaced by protamines in late spermatids. In Ovis aries (Sheep), this protein is Spermatid nuclear transition protein 3.